A 472-amino-acid chain; its full sequence is Pentatricopeptide repeat-containing protein At5g46100 (472 aa).

11 PPR repeats span residues 50 to 84 (DQSS…NCVV), 85 to 119 (SEDI…DCDP), 120 to 154 (SQKA…GLPP), 155 to 190 (TVAS…GCDP), 191 to 225 (DSYT…DCAP), 226 to 260 (TVVT…GIEP), 261 to 295 (NVFT…GCRP), 296 to 330 (NMVT…GLKP), 331 to 365 (DAGL…GITP), 373 to 406 (HVKT…GISV), and 407 to 441 (EVET…GCIP).

It belongs to the PPR family. P subfamily.

The polypeptide is Pentatricopeptide repeat-containing protein At5g46100 (Arabidopsis thaliana (Mouse-ear cress)).